We begin with the raw amino-acid sequence, 396 residues long: Tryptophan synthase beta chain (396 aa).

K88 carries the N6-(pyridoxal phosphate)lysine modification.

The protein belongs to the TrpB family. As to quaternary structure, tetramer of two alpha and two beta chains. It depends on pyridoxal 5'-phosphate as a cofactor.

It catalyses the reaction (1S,2R)-1-C-(indol-3-yl)glycerol 3-phosphate + L-serine = D-glyceraldehyde 3-phosphate + L-tryptophan + H2O. It participates in amino-acid biosynthesis; L-tryptophan biosynthesis; L-tryptophan from chorismate: step 5/5. In terms of biological role, the beta subunit is responsible for the synthesis of L-tryptophan from indole and L-serine. The polypeptide is Tryptophan synthase beta chain (Actinobacillus pleuropneumoniae serotype 5b (strain L20)).